We begin with the raw amino-acid sequence, 110 residues long: ATP-dependent Clp protease adapter protein ClpS 2 (110 aa).

Positions 1–24 (MSNDENRSGSPTGPNTSVITKVKP) are disordered. Polar residues predominate over residues 8 to 19 (SGSPTGPNTSVI).

This sequence belongs to the ClpS family. In terms of assembly, binds to the N-terminal domain of the chaperone ClpA.

Involved in the modulation of the specificity of the ClpAP-mediated ATP-dependent protein degradation. This chain is ATP-dependent Clp protease adapter protein ClpS 2, found in Bradyrhizobium diazoefficiens (strain JCM 10833 / BCRC 13528 / IAM 13628 / NBRC 14792 / USDA 110).